The following is an 888-amino-acid chain: Alanine--tRNA ligase (888 aa).

Zn(2+) contacts are provided by His-570, His-574, Cys-673, and His-677.

The protein belongs to the class-II aminoacyl-tRNA synthetase family. The cofactor is Zn(2+).

The protein localises to the cytoplasm. It carries out the reaction tRNA(Ala) + L-alanine + ATP = L-alanyl-tRNA(Ala) + AMP + diphosphate. Functionally, catalyzes the attachment of alanine to tRNA(Ala) in a two-step reaction: alanine is first activated by ATP to form Ala-AMP and then transferred to the acceptor end of tRNA(Ala). Also edits incorrectly charged Ser-tRNA(Ala) and Gly-tRNA(Ala) via its editing domain. This chain is Alanine--tRNA ligase, found in Chlorobium phaeobacteroides (strain DSM 266 / SMG 266 / 2430).